A 1155-amino-acid chain; its full sequence is DNA-directed RNA polymerase subunit beta (1155 aa).

This sequence belongs to the RNA polymerase beta chain family. In terms of assembly, the RNAP catalytic core consists of 2 alpha, 1 beta, 1 beta' and 1 omega subunit. When a sigma factor is associated with the core the holoenzyme is formed, which can initiate transcription.

The enzyme catalyses RNA(n) + a ribonucleoside 5'-triphosphate = RNA(n+1) + diphosphate. Its function is as follows. DNA-dependent RNA polymerase catalyzes the transcription of DNA into RNA using the four ribonucleoside triphosphates as substrates. In Borrelia duttonii (strain Ly), this protein is DNA-directed RNA polymerase subunit beta.